The sequence spans 206 residues: Large ribosomal subunit protein uL4 (206 aa).

Over residues 42-54 (RRQQGTHQSQGRS) the composition is skewed to polar residues. Positions 42-94 (RRQQGTHQSQGRSDVSRTGAKMFKQKGTGRARHSSARAPQFRGGGKAHGPVFR) are disordered. A compositionally biased stretch (basic residues) spans 64 to 76 (FKQKGTGRARHSS).

This sequence belongs to the universal ribosomal protein uL4 family. As to quaternary structure, part of the 50S ribosomal subunit.

Functionally, one of the primary rRNA binding proteins, this protein initially binds near the 5'-end of the 23S rRNA. It is important during the early stages of 50S assembly. It makes multiple contacts with different domains of the 23S rRNA in the assembled 50S subunit and ribosome. Forms part of the polypeptide exit tunnel. The polypeptide is Large ribosomal subunit protein uL4 (Bartonella tribocorum (strain CIP 105476 / IBS 506)).